Consider the following 469-residue polypeptide: ATP synthase subunit beta (469 aa).

155-162 (GGAGVGKT) contacts ATP.

The protein belongs to the ATPase alpha/beta chains family. In terms of assembly, F-type ATPases have 2 components, CF(1) - the catalytic core - and CF(0) - the membrane proton channel. CF(1) has five subunits: alpha(3), beta(3), gamma(1), delta(1), epsilon(1). CF(0) has three main subunits: a(1), b(2) and c(9-12). The alpha and beta chains form an alternating ring which encloses part of the gamma chain. CF(1) is attached to CF(0) by a central stalk formed by the gamma and epsilon chains, while a peripheral stalk is formed by the delta and b chains.

The protein resides in the cell inner membrane. It carries out the reaction ATP + H2O + 4 H(+)(in) = ADP + phosphate + 5 H(+)(out). Its function is as follows. Produces ATP from ADP in the presence of a proton gradient across the membrane. The catalytic sites are hosted primarily by the beta subunits. The protein is ATP synthase subunit beta of Helicobacter pylori (strain P12).